The primary structure comprises 633 residues: Acetylcholinesterase (633 aa).

An N-terminal signal peptide occupies residues 1–23 (MKILDALLFPVIFIMFFIHLSIA). Residues Cys91 and Cys118 are joined by a disulfide bond. N-linked (GlcNAc...) asparagine glycosylation is found at Asn133 and Asn184. Ser225 functions as the Acyl-ester intermediate in the catalytic mechanism. Cys279 and Cys290 are joined by a disulfide. A glycan (N-linked (GlcNAc...) asparagine) is linked at Asn283. The Charge relay system role is filled by Glu352. Asn368 carries N-linked (GlcNAc...) asparagine glycosylation. Residues Cys427 and Cys579 are joined by a disulfide bond. The active-site Charge relay system is the His494. N-linked (GlcNAc...) asparagine glycosylation is found at Asn511 and Asn591.

This sequence belongs to the type-B carboxylesterase/lipase family.

The protein localises to the synapse. It is found in the secreted. The protein resides in the cell membrane. It catalyses the reaction acetylcholine + H2O = choline + acetate + H(+). Its function is as follows. Terminates signal transduction at the neuromuscular junction by rapid hydrolysis of the acetylcholine released into the synaptic cleft. This Electrophorus electricus (Electric eel) protein is Acetylcholinesterase (ache).